The chain runs to 158 residues: Endoribonuclease YbeY (158 aa).

Positions 119, 123, and 129 each coordinate Zn(2+).

This sequence belongs to the endoribonuclease YbeY family. Zn(2+) serves as cofactor.

Its subcellular location is the cytoplasm. In terms of biological role, single strand-specific metallo-endoribonuclease involved in late-stage 70S ribosome quality control and in maturation of the 3' terminus of the 16S rRNA. In Chlamydia felis (strain Fe/C-56) (Chlamydophila felis), this protein is Endoribonuclease YbeY.